Consider the following 418-residue polypeptide: Tyrosine--tRNA ligase 1 (418 aa).

Y34 provides a ligand contact to L-tyrosine. The short motif at 39-48 is the 'HIGH' region element; that stretch reads PTADSLHIGH. Residues Y169 and Q173 each contribute to the L-tyrosine site. A 'KMSKS' region motif is present at residues 230–234; the sequence is KFGKT. K233 lines the ATP pocket. The 67-residue stretch at 352-418 folds into the S4 RNA-binding domain; the sequence is TVLIDLLVES…GKKKYFLIRY (67 aa).

The protein belongs to the class-I aminoacyl-tRNA synthetase family. TyrS type 1 subfamily. Homodimer.

Its subcellular location is the cytoplasm. The catalysed reaction is tRNA(Tyr) + L-tyrosine + ATP = L-tyrosyl-tRNA(Tyr) + AMP + diphosphate + H(+). In terms of biological role, catalyzes the attachment of tyrosine to tRNA(Tyr) in a two-step reaction: tyrosine is first activated by ATP to form Tyr-AMP and then transferred to the acceptor end of tRNA(Tyr). The sequence is that of Tyrosine--tRNA ligase 1 from Bacillus cereus (strain ATCC 10987 / NRS 248).